Consider the following 151-residue polypeptide: Large ribosomal subunit protein bL9 (151 aa).

This sequence belongs to the bacterial ribosomal protein bL9 family.

Binds to the 23S rRNA. The protein is Large ribosomal subunit protein bL9 of Lacticaseibacillus casei (strain BL23) (Lactobacillus casei).